Consider the following 119-residue polypeptide: Ribonuclease P protein component (119 aa).

Belongs to the RnpA family. Consists of a catalytic RNA component (M1 or rnpB) and a protein subunit.

It carries out the reaction Endonucleolytic cleavage of RNA, removing 5'-extranucleotides from tRNA precursor.. RNaseP catalyzes the removal of the 5'-leader sequence from pre-tRNA to produce the mature 5'-terminus. It can also cleave other RNA substrates such as 4.5S RNA. The protein component plays an auxiliary but essential role in vivo by binding to the 5'-leader sequence and broadening the substrate specificity of the ribozyme. In Syntrophomonas wolfei subsp. wolfei (strain DSM 2245B / Goettingen), this protein is Ribonuclease P protein component.